The primary structure comprises 211 residues: MISYYFQGFALGAAMILPLGPQNAFVMNQGIRRQYHLMIALLCALSDLVLISAGIFGGSALLMQSPWLLALVTWGGVAFLLWYGFGALKTAMSSNLELASAEVMKQGRWKIIATMLAVTWLNPHVYLDTFVVLGSLGGQLAMEPKRWFALGTISASFLWFFGLALLAAWLAPRLRTVKAQRIINILVGVVMWLIAFQLAREGVAHMQALFN.

Helical transmembrane passes span 1–21 (MISY…PLGP), 37–57 (LMIA…GIFG), 68–88 (LLAL…FGAL), 111–131 (IIAT…DTFV), 147–167 (WFAL…ALLA), and 179–199 (AQRI…FQLA).

Belongs to the LysE/ArgO transporter (TC 2.A.75) family.

The protein localises to the cell inner membrane. The enzyme catalyses L-arginine(in) = L-arginine(out). In terms of biological role, involved in the export of arginine. Important to control the intracellular level of arginine and the correct balance between arginine and lysine. This chain is Arginine exporter protein ArgO, found in Salmonella choleraesuis (strain SC-B67).